The sequence spans 201 residues: ATP-dependent Clp protease proteolytic subunit (201 aa).

Catalysis depends on S98, which acts as the Nucleophile. H123 is an active-site residue.

This sequence belongs to the peptidase S14 family. Fourteen ClpP subunits assemble into 2 heptameric rings which stack back to back to give a disk-like structure with a central cavity, resembling the structure of eukaryotic proteasomes.

The protein resides in the cytoplasm. It catalyses the reaction Hydrolysis of proteins to small peptides in the presence of ATP and magnesium. alpha-casein is the usual test substrate. In the absence of ATP, only oligopeptides shorter than five residues are hydrolyzed (such as succinyl-Leu-Tyr-|-NHMec, and Leu-Tyr-Leu-|-Tyr-Trp, in which cleavage of the -Tyr-|-Leu- and -Tyr-|-Trp bonds also occurs).. Functionally, cleaves peptides in various proteins in a process that requires ATP hydrolysis. Has a chymotrypsin-like activity. Plays a major role in the degradation of misfolded proteins. The chain is ATP-dependent Clp protease proteolytic subunit from Rickettsia conorii (strain ATCC VR-613 / Malish 7).